The chain runs to 254 residues: Anamorsin homolog (254 aa).

The segment at 4-132 is N-terminal SAM-like domain; that stretch reads VQENNHVLYI…EIGSAAKLSL (129 aa). The tract at residues 132–167 is linker; it reads LGGNKAKVAAVWKLDVDDDDDERIDEDELLDEEDKV. Positions 177, 186, 189, and 191 each coordinate [2Fe-2S] cluster. A fe-S binding site A region spans residues 177–191; it reads CGTTGKRKACKDCSC. Residues Cys-215, Cys-218, Cys-226, and Cys-229 each contribute to the [4Fe-4S] cluster site. 2 consecutive short sequence motifs (cx2C motif) follow at residues 215–218 and 226–229; these read CGSC and CATC. A fe-S binding site B region spans residues 215–229; the sequence is CGSCYLGDAFRCATC.

Belongs to the anamorsin family. Monomer. [2Fe-2S] cluster is required as a cofactor. It depends on [4Fe-4S] cluster as a cofactor.

The protein localises to the cytoplasm. It is found in the mitochondrion intermembrane space. Its function is as follows. Component of the cytosolic iron-sulfur (Fe-S) protein assembly (CIA) machinery. Required for the maturation of extramitochondrial Fe-S proteins. Part of an electron transfer chain functioning in an early step of cytosolic Fe-S biogenesis, facilitating the de novo assembly of a [4Fe-4S] cluster on the cytosolic Fe-S scaffold complex. Electrons are transferred from NADPH via a FAD- and FMN-containing diflavin oxidoreductase. Together with the diflavin oxidoreductase, also required for the assembly of the diferric tyrosyl radical cofactor of ribonucleotide reductase (RNR), probably by providing electrons for reduction during radical cofactor maturation in the catalytic small subunit. The sequence is that of Anamorsin homolog from Aedes aegypti (Yellowfever mosquito).